The sequence spans 401 residues: Phosphoglycerate kinase (401 aa).

Residues 20-22 (DFN), arginine 35, 58-61 (HLGR), arginine 117, and arginine 154 each bind substrate. Residues lysine 204, glycine 298, glutamate 329, and 358–361 (GGDS) each bind ATP.

The protein belongs to the phosphoglycerate kinase family. Monomer.

The protein localises to the cytoplasm. The enzyme catalyses (2R)-3-phosphoglycerate + ATP = (2R)-3-phospho-glyceroyl phosphate + ADP. It functions in the pathway carbohydrate degradation; glycolysis; pyruvate from D-glyceraldehyde 3-phosphate: step 2/5. The sequence is that of Phosphoglycerate kinase from Bifidobacterium longum subsp. infantis (strain ATCC 15697 / DSM 20088 / JCM 1222 / NCTC 11817 / S12).